Consider the following 578-residue polypeptide: PX domain-containing protein kinase-like protein (578 aa).

The 113-residue stretch at 14-126 folds into the PX domain; it reads LDDTVPLTAA…KFLDPNNYSA (113 aa). One can recognise a Protein kinase domain in the interval 88–481; that stretch reads FIAERQKGLQ…LENSEEHSAK (394 aa). Basic residues-rich tracts occupy residues 437–448 and 457–469; these read IHQHRRLTRAQS and KKRK…KSKR. 2 disordered regions span residues 437–548 and 559–578; these read IHQH…NGMS and FQKG…PKIG. The span at 483–513 shows a compositional bias: low complexity; that stretch reads SNSNNSAGSGASSPLTSPSSPTPPSTSGISA. Residues 514–530 are compositionally biased toward pro residues; sequence LPPPPPPPPPPAAPLPP. Residues 548–567 form the WH2 domain; the sequence is SRGALLSSIQNFQKGTLRKA. Over residues 568–578 the composition is skewed to basic and acidic residues; that stretch reads KTCDHSAPKIG.

It belongs to the protein kinase superfamily. Widely expressed in all tissues examined except in heart. Isoform 1 is expressed in high levels in the brain, skeletal muscle, spleen and testis. Isoform 7 expression has yet to be demonstrated.

It localises to the cytoplasm. The protein resides in the cell membrane. Binds to and modulates brain Na,K-ATPase subunits ATP1B1 and ATP1B3 and may thereby participate in the regulation of electrical excitability and synaptic transmission. May not display kinase activity. The polypeptide is PX domain-containing protein kinase-like protein (Homo sapiens (Human)).